Here is a 1711-residue protein sequence, read N- to C-terminus: Reverse gyrase (1711 aa).

Residues 1-39 (MKAVYREMCPNCWGRISDERLVMRNPCEECLDEPVHADS) form an RG N-terminal-type zinc finger. 4 residues coordinate Zn(2+): Cys9, Cys12, Cys27, and Cys30. Residues Gln89 and 106–113 (APTGMGKS) each bind ATP. Residues 93–256 (VKRLLKGRSF…RLKKQMSRYL (164 aa)) form the Helicase ATP-binding domain. Positions 213–216 (DDVD) match the DEAD box motif. The topoisomerase I stretch occupies residues 638–1711 (DLVRSALMIV…YSEIQRYVSG (1074 aa)). Positions 642-805 (SALMIVESPN…NIKRIEFHEV (164 aa)) constitute a Toprim domain. Glu648 contributes to the Mg(2+) binding site. The RG C-terminal-type zinc finger occupies 722–751 (LKRCRDCGHQFVDWEKKGVCPRCGSTNVRD). Zn(2+) is bound by residues Cys725, Cys728, Cys741, and Cys744. Asp774 serves as a coordination point for Mg(2+). A Topo IA-type catalytic domain is found at 821 to 1709 (NENRVNAQIV…ELYSEIQRYV (889 aa)). The region spanning 1160–1287 (VFGLVLGDGT…LSVYLYQIGI (128 aa)) is the DOD-type homing endonuclease domain. The active-site O-(5'-phospho-DNA)-tyrosine intermediate is the Tyr1452.

In the N-terminal section; belongs to the DEAD box helicase family. DDVD subfamily. This sequence in the C-terminal section; belongs to the type IA topoisomerase family. In terms of assembly, monomer. The cofactor is Zn(2+). Requires Mg(2+) as cofactor. In terms of processing, this protein undergoes a protein self splicing that involves a post-translational excision of the intervening region (intein) followed by peptide ligation.

The protein localises to the cytoplasm. The enzyme catalyses ATP + H2O = ADP + phosphate + H(+). Functionally, modifies the topological state of DNA by introducing positive supercoils in an ATP-dependent process, increasing the linking number in steps of +1. Binds to single-stranded DNA, transiently cleaves and then rejoins the ends, introducing a positive supercoil in the process. The scissile phosphodiester is attacked by the catalytic tyrosine of the enzyme, resulting in the formation of a DNA-(5'-phosphotyrosyl)-enzyme intermediate. Probably involved in rewinding DNA strands in regions of the chromosome that have opened up to allow replication, transcription, DNA repair and/or for DNA protection. In Thermococcus kodakarensis (strain ATCC BAA-918 / JCM 12380 / KOD1) (Pyrococcus kodakaraensis (strain KOD1)), this protein is Reverse gyrase.